Consider the following 292-residue polypeptide: uncharacterized protein (292 aa).

Residues Thr43 and Tyr105 each act as charge relay system in the active site. The active-site Proton donor is Tyr131. Residue Lys159 is the Schiff-base intermediate with substrate of the active site.

This sequence belongs to the DapA family. In terms of assembly, homotetramer.

It is found in the cytoplasm. This is an uncharacterized protein from Thermococcus kodakarensis (strain ATCC BAA-918 / JCM 12380 / KOD1) (Pyrococcus kodakaraensis (strain KOD1)).